A 250-amino-acid polypeptide reads, in one-letter code: Ribosomal RNA small subunit methyltransferase J (250 aa).

Residues 96–97 (RD) and Asp-168 each bind S-adenosyl-L-methionine.

Belongs to the methyltransferase superfamily. RsmJ family.

The protein localises to the cytoplasm. The enzyme catalyses guanosine(1516) in 16S rRNA + S-adenosyl-L-methionine = N(2)-methylguanosine(1516) in 16S rRNA + S-adenosyl-L-homocysteine + H(+). Specifically methylates the guanosine in position 1516 of 16S rRNA. In Neisseria meningitidis serogroup C (strain 053442), this protein is Ribosomal RNA small subunit methyltransferase J.